A 153-amino-acid polypeptide reads, in one-letter code: Protein SprT-like (153 aa).

The region spanning Gln7–Ser145 is the SprT-like domain. Residue His67 coordinates Zn(2+). Glu68 is an active-site residue. His71 contributes to the Zn(2+) binding site.

This sequence belongs to the SprT family. The cofactor is Zn(2+).

It is found in the cytoplasm. This is Protein SprT-like from Enterococcus faecalis (strain ATCC 700802 / V583).